The chain runs to 170 residues: Neurotensin/neuromedin N (170 aa).

Positions 1 to 23 (MMAGMKIQLVCMILLAFSSWSLC) are cleaved as a signal peptide.

This sequence belongs to the neurotensin family. Interacts with NTSR1. Interacts with SORT1. Interacts with SORL1. Neurotensin is cleaved and degraded by Angiotensin-converting enzyme (ACE) and neprilysin (MME).

The protein localises to the secreted. The protein resides in the cytoplasmic vesicle. Its subcellular location is the secretory vesicle. Neurotensin may play an endocrine or paracrine role in the regulation of fat metabolism. It causes contraction of smooth muscle. This is Neurotensin/neuromedin N (NTS) from Canis lupus familiaris (Dog).